A 23-amino-acid chain; its full sequence is Basic phospholipase A2 CB2 (23 aa).

It depends on Ca(2+) as a cofactor. Contains 7 disulfide bonds. In terms of tissue distribution, expressed by the venom gland.

It is found in the secreted. It carries out the reaction a 1,2-diacyl-sn-glycero-3-phosphocholine + H2O = a 1-acyl-sn-glycero-3-phosphocholine + a fatty acid + H(+). Functionally, snake venom phospholipase A2 (PLA2) that shows presynaptic neurotoxicity. PLA2 catalyzes the calcium-dependent hydrolysis of the 2-acyl groups in 3-sn-phosphoglycerides. The protein is Basic phospholipase A2 CB2 of Crotalus durissus cumanensis (South American rattlesnake).